The chain runs to 274 residues: NADPH-dependent 7-cyano-7-deazaguanine reductase (274 aa).

80–82 is a binding site for substrate; sequence VES. 82–83 contacts NADPH; the sequence is SK. Catalysis depends on C181, which acts as the Thioimide intermediate. D188 serves as the catalytic Proton donor. Substrate is bound at residue 220 to 221; that stretch reads HE. 249–250 serves as a coordination point for NADPH; that stretch reads RG.

This sequence belongs to the GTP cyclohydrolase I family. QueF type 2 subfamily. In terms of assembly, homodimer.

It is found in the cytoplasm. The enzyme catalyses 7-aminomethyl-7-carbaguanine + 2 NADP(+) = 7-cyano-7-deazaguanine + 2 NADPH + 3 H(+). It functions in the pathway tRNA modification; tRNA-queuosine biosynthesis. In terms of biological role, catalyzes the NADPH-dependent reduction of 7-cyano-7-deazaguanine (preQ0) to 7-aminomethyl-7-deazaguanine (preQ1). The protein is NADPH-dependent 7-cyano-7-deazaguanine reductase of Burkholderia pseudomallei (strain 1106a).